The following is a 264-amino-acid chain: Hydroxyethylthiazole kinase (264 aa).

Met-43 lines the substrate pocket. ATP contacts are provided by Lys-119 and Ser-165. Gly-192 is a substrate binding site.

The protein belongs to the Thz kinase family. It depends on Mg(2+) as a cofactor.

The enzyme catalyses 5-(2-hydroxyethyl)-4-methylthiazole + ATP = 4-methyl-5-(2-phosphooxyethyl)-thiazole + ADP + H(+). It participates in cofactor biosynthesis; thiamine diphosphate biosynthesis; 4-methyl-5-(2-phosphoethyl)-thiazole from 5-(2-hydroxyethyl)-4-methylthiazole: step 1/1. Catalyzes the phosphorylation of the hydroxyl group of 4-methyl-5-beta-hydroxyethylthiazole (THZ). This Methanocorpusculum labreanum (strain ATCC 43576 / DSM 4855 / Z) protein is Hydroxyethylthiazole kinase.